The primary structure comprises 197 residues: CASP-like protein 1B1 (197 aa).

Ala-2 is subject to N-acetylalanine. Topologically, residues 2-17 (AVSKLTLAATSGKSCK) are cytoplasmic. The helical transmembrane segment at 18–38 (ILLGLRLLAFSATLSAAIVMG) threads the bilayer. The Extracellular segment spans residues 39 to 69 (LNKETKTFIVGKVGNTPIQATFTAKFDHTPA). A helical transmembrane segment spans residues 70 to 90 (FVFFVVANAMVSFHNLLMIAL). At 91–106 (QIFGGKMEFTGFRLLS) the chain is on the cytoplasmic side. The helical transmembrane segment at 107–127 (VAILDMLNVTLISAAANAAAF) threads the bilayer. Topologically, residues 128-156 (MAEVGKNGNKHARWDKICDRFATYCDHGA) are extracellular. A helical membrane pass occupies residues 157 to 177 (GALIAAFAGVILMLIISAASI). Residues 178-197 (SRLVQPNKCCSTTASPSVVP) are Cytoplasmic-facing.

Belongs to the Casparian strip membrane proteins (CASP) family. In terms of assembly, homodimer and heterodimers.

The protein localises to the cell membrane. This chain is CASP-like protein 1B1, found in Arabidopsis thaliana (Mouse-ear cress).